Here is a 120-residue protein sequence, read N- to C-terminus: NAD(P)H-quinone oxidoreductase subunit 3 (120 aa).

3 helical membrane-spanning segments follow: residues 7 to 27 (YEYF…SLTA), 64 to 84 (MFAL…PWAV), and 89 to 109 (LGLL…VALV).

Belongs to the complex I subunit 3 family. As to quaternary structure, NDH-1 can be composed of about 15 different subunits; different subcomplexes with different compositions have been identified which probably have different functions.

Its subcellular location is the cellular thylakoid membrane. The catalysed reaction is a plastoquinone + NADH + (n+1) H(+)(in) = a plastoquinol + NAD(+) + n H(+)(out). It carries out the reaction a plastoquinone + NADPH + (n+1) H(+)(in) = a plastoquinol + NADP(+) + n H(+)(out). NDH-1 shuttles electrons from an unknown electron donor, via FMN and iron-sulfur (Fe-S) centers, to quinones in the respiratory and/or the photosynthetic chain. The immediate electron acceptor for the enzyme in this species is believed to be plastoquinone. Couples the redox reaction to proton translocation, and thus conserves the redox energy in a proton gradient. Cyanobacterial NDH-1 also plays a role in inorganic carbon-concentration. This Microcystis aeruginosa (strain NIES-843 / IAM M-2473) protein is NAD(P)H-quinone oxidoreductase subunit 3.